A 103-amino-acid chain; its full sequence is Protein FMC1 homolog (103 aa).

This sequence belongs to the FMC1 family.

This chain is Protein FMC1 homolog, found in Nematostella vectensis (Starlet sea anemone).